We begin with the raw amino-acid sequence, 173 residues long: Tumor necrosis factor ligand superfamily member 18 (173 aa).

The Cytoplasmic segment spans residues 1–20 (MEEMPLRESSPQRAERCKKS). Residues 21 to 41 (WLLCIVALLLMLLCSLGTLIY) traverse the membrane as a helical; Signal-anchor for type II membrane protein segment. The THD domain occupies 40–166 (IYTSLKPTAI…TNTYWGIILM (127 aa)). Topologically, residues 42-173 (TSLKPTAIES…ILMPDLPFIS (132 aa)) are extracellular. Cys52 and Cys72 are oxidised to a cystine. Asn74 carries N-linked (GlcNAc...) asparagine glycosylation.

Belongs to the tumor necrosis factor family. In terms of assembly, homotrimer. Homodimer. N-glycosylated. Detected in immature and mature dendritic cells and in macrophages (at protein level). Detected in spleen, lung, heart, thymus, monocytes, macrophages, B-cells and dendritic cells.

The protein resides in the cell membrane. Its function is as follows. Cytokine that binds to TNFRSF18/AITR/GITR. Regulates T-cell responses. Can function as costimulator and lower the threshold for T-cell activation and T-cell proliferation. Important for interactions between activated T-lymphocytes and endothelial cells. Mediates activation of NF-kappa-B. Triggers increased phosphorylation of STAT1 and up-regulates expression of VCAM1 and ICAM1. Promotes leukocyte adhesion to endothelial cells. Regulates migration of monocytes from the splenic reservoir to sites of inflammation. The protein is Tumor necrosis factor ligand superfamily member 18 (Tnfsf18) of Mus musculus (Mouse).